The primary structure comprises 350 residues: Protein-glutamate methylesterase/protein-glutamine glutaminase (350 aa).

The 118-residue stretch at 5-122 folds into the Response regulatory domain; sequence KVLCVDDSAL…RDGLIEYSEV (118 aa). 4-aspartylphosphate is present on Asp56. Residues 152 to 346 enclose the CheB-type methylesterase domain; it reads PFASSEKLVI…ERILTRLGDR (195 aa). Catalysis depends on residues Ser165, His191, and Asp288.

It belongs to the CheB family. Post-translationally, phosphorylated by CheA. Phosphorylation of the N-terminal regulatory domain activates the methylesterase activity.

It localises to the cytoplasm. The enzyme catalyses [protein]-L-glutamate 5-O-methyl ester + H2O = L-glutamyl-[protein] + methanol + H(+). The catalysed reaction is L-glutaminyl-[protein] + H2O = L-glutamyl-[protein] + NH4(+). Involved in chemotaxis. Part of a chemotaxis signal transduction system that modulates chemotaxis in response to various stimuli. Catalyzes the demethylation of specific methylglutamate residues introduced into the chemoreceptors (methyl-accepting chemotaxis proteins or MCP) by CheR. Also mediates the irreversible deamidation of specific glutamine residues to glutamic acid. This is Protein-glutamate methylesterase/protein-glutamine glutaminase from Bordetella parapertussis (strain 12822 / ATCC BAA-587 / NCTC 13253).